A 179-amino-acid chain; its full sequence is Inner membrane-spanning protein YciB (179 aa).

5 helical membrane passes run 3 to 23, 49 to 69, 76 to 96, 121 to 141, and 149 to 169; these read FLFDLFPVILFFVAFKLFGIY, PMQWVSLAIIAVFGGATILLH, WKPTVLYWLFAVTLIGSVIGW, VAWAGFFAVMGVLNLYVAYQF, and FKLFGSMGLMLVFIVAQSIWL.

It belongs to the YciB family.

The protein resides in the cell inner membrane. In terms of biological role, plays a role in cell envelope biogenesis, maintenance of cell envelope integrity and membrane homeostasis. This Cupriavidus metallidurans (strain ATCC 43123 / DSM 2839 / NBRC 102507 / CH34) (Ralstonia metallidurans) protein is Inner membrane-spanning protein YciB.